The following is a 128-amino-acid chain: Gastrotropin (128 aa).

Residue A2 is modified to N-acetylalanine.

This sequence belongs to the calycin superfamily. Fatty-acid binding protein (FABP) family. Expressed in ovary granulosa and luteal cells.

The protein resides in the cytoplasm. The protein localises to the membrane. Functionally, binds to bile acids and is involved in enterohepatic bile acid metabolism. Required for efficient apical to basolateral transport of conjugated bile acids in ileal enterocytes. Stimulates gastric acid and pepsinogen secretion. The polypeptide is Gastrotropin (Fabp6) (Mus musculus (Mouse)).